A 62-amino-acid polypeptide reads, in one-letter code: Potassium channel toxin alpha-KTx Tx773 (62 aa).

Residues 1 to 18 (MQKLFIVLLLFCILRLDA) form the signal peptide. 3 disulfide bridges follow: Cys-28–Cys-46, Cys-33–Cys-59, and Cys-37–Cys-61.

The protein belongs to the short scorpion toxin superfamily. Potassium channel inhibitor family. Alpha-KTx 23 subfamily. As to expression, expressed by the venom gland.

It localises to the secreted. May block potassium channels. This is Potassium channel toxin alpha-KTx Tx773 from Buthus israelis (Israeli scorpion).